Here is a 172-residue protein sequence, read N- to C-terminus: RNA pyrophosphohydrolase (172 aa).

The 144-residue stretch at 6–149 (GFRANVGIII…KRDVYRKVMK (144 aa)) folds into the Nudix hydrolase domain. Positions 38-59 (GGLDDGESAEEAMYRELYEEVG) match the Nudix box motif.

This sequence belongs to the Nudix hydrolase family. RppH subfamily. A divalent metal cation is required as a cofactor.

Functionally, accelerates the degradation of transcripts by removing pyrophosphate from the 5'-end of triphosphorylated RNA, leading to a more labile monophosphorylated state that can stimulate subsequent ribonuclease cleavage. The chain is RNA pyrophosphohydrolase from Shewanella denitrificans (strain OS217 / ATCC BAA-1090 / DSM 15013).